Reading from the N-terminus, the 112-residue chain is ATP-dependent Clp protease adapter protein ClpS (112 aa).

It belongs to the ClpS family. In terms of assembly, binds to the N-terminal domain of the chaperone ClpA.

Functionally, involved in the modulation of the specificity of the ClpAP-mediated ATP-dependent protein degradation. This is ATP-dependent Clp protease adapter protein ClpS from Rhodococcus opacus (strain B4).